Reading from the N-terminus, the 643-residue chain is MELKGVQPSNGSPNGNGNGATNAASTEKTDAEKPTAERTNWGNGLEFLMSCISVSVGLGNVWRFPFTAYENGGGAFLIPYIIVLFLIGKPMYYLEMIMGQFTSQGTVKIWSVVPGFVGVGYGQAFGTICIISYYSSLLALTLYYLFVSFQSELPWSYCRDEWTNCVNSRPEEYVDNLLTGVSLANESARNLSGIGLVANNETEKLQSSSELYFLNVVIKEKLDISDGVGDPDWKLTLALFVAWVVIFLVIMRGVKSSGKAAYFLALFPYVVLFVLLIRAVTLEGARDGILFFLEPQWGELLNPTVWKEAVVQCFFSLAVGSGPIIMFASYNRFDHGIYRDAMIVTTLDTLTSLLGGITIFAILGNLAHNLQIENIRDVVRSGTGLAFISYPDAISKFQAVPQLFSVLFFFMLFVLGIGSIVALQSTIVTIICDQFKGWKYWKVALTTSVCGFLMGLVYVTPGGQWILTLVDFYGGTYVVFILAIFELAGIVWVYGLQNFCDDIEFMCNRRVSLYWRVCWSFFTPVMMIIIFIYSMATIEPIKYSELYFPEAANVAGWLLFAIGAAQFPLWGLWYASRHPQGTYWKSLKASLKPSDRWGPANPETRREWVIFKNQKAPQRATQKDTSKLGFFWRKIANFCGSNK.

Residues 1–38 (MELKGVQPSNGSPNGNGNGATNAASTEKTDAEKPTAER) form a disordered region. Residues 1–40 (MELKGVQPSNGSPNGNGNGATNAASTEKTDAEKPTAERTN) are Cytoplasmic-facing. A compositionally biased stretch (low complexity) spans 8 to 26 (PSNGSPNGNGNGATNAAST). Residues 27–36 (EKTDAEKPTA) show a composition bias toward basic and acidic residues. Helical transmembrane passes span 41-61 (WGNGLEFLMSCISVSVGLGNV), 74-94 (GAFLIPYIIVLFLIGKPMYYL), and 111-131 (SVVPGFVGVGYGQAFGTICII). Residues Asn-185, Asn-190, and Asn-200 are each glycosylated (N-linked (GlcNAc...) asparagine). A run of 9 helical transmembrane segments spans residues 231–251 (PDWKLTLALFVAWVVIFLVIM), 260–280 (AAYFLALFPYVVLFVLLIRAV), 309–329 (AVVQCFFSLAVGSGPIIMFAS), 343–363 (IVTTLDTLTSLLGGITIFAIL), 403–423 (LFSVLFFFMLFVLGIGSIVAL), 449–469 (VCGFLMGLVYVTPGGQWILTL), 476–496 (TYVVFILAIFELAGIVWVYGL), 518–538 (CWSFFTPVMMIIIFIYSMATI), and 554–574 (VAGWLLFAIGAAQFPLWGLWY).

The protein belongs to the sodium:neurotransmitter symporter (SNF) (TC 2.A.22) family.

It is found in the membrane. Unusual broad substrate spectrum amino acid:sodium cotransporter that promotes absorption of the D isomers of essential amino acids. Neutral amino acids are the preferred substrates, especially methionine and phenylalanine. The polypeptide is Sodium-dependent nutrient amino acid transporter 1 (Drosophila simulans (Fruit fly)).